Consider the following 510-residue polypeptide: Lysine--tRNA ligase (510 aa).

Mg(2+)-binding residues include Glu420 and Glu427.

This sequence belongs to the class-II aminoacyl-tRNA synthetase family. Homodimer. Mg(2+) serves as cofactor.

The protein resides in the cytoplasm. It carries out the reaction tRNA(Lys) + L-lysine + ATP = L-lysyl-tRNA(Lys) + AMP + diphosphate. This is Lysine--tRNA ligase (lysS) from Vibrio cholerae serotype O1 (strain ATCC 39315 / El Tor Inaba N16961).